We begin with the raw amino-acid sequence, 141 residues long: Pheromone-binding protein-related protein 6 (141 aa).

The signal sequence occupies residues 1–16 (MVKYPLILLLIGCAAA). Cystine bridges form between C41–C72, C68–C120, and C111–C129.

Belongs to the PBP/GOBP family. As to expression, antenna. Mostly expressed in two types of sensory hairs, sensilla trichodea and small sensilla basiconica, in the ventro-lateral region of the third antennal segment (at protein level).

The protein resides in the secreted. The chain is Pheromone-binding protein-related protein 6 (Obp83b) from Drosophila melanogaster (Fruit fly).